Consider the following 224-residue polypeptide: Glutathione S-transferase U28 (224 aa).

Positions 6–85 (SKVVVLDFWA…YIDETWTDAA (80 aa)) constitute a GST N-terminal domain. Residues 16 to 17 (SP), 42 to 43 (NK), 56 to 57 (KV), and 69 to 70 (ES) contribute to the glutathione site. The GST C-terminal domain occupies 91–217 (DPQSRATARF…EKVYQQVLKL (127 aa)). At Thr154 the chain carries Phosphothreonine.

It belongs to the GST superfamily. Tau family.

It localises to the cytoplasm. It is found in the cytosol. The enzyme catalyses RX + glutathione = an S-substituted glutathione + a halide anion + H(+). Functionally, may be involved in the conjugation of reduced glutathione to a wide number of exogenous and endogenous hydrophobic electrophiles and have a detoxification role against certain herbicides. This Arabidopsis thaliana (Mouse-ear cress) protein is Glutathione S-transferase U28 (GSTU28).